A 2999-amino-acid chain; its full sequence is TPR and ankyrin repeat-containing protein 1 (2999 aa).

The interval 1-87 (MASTTAGRRW…QPRGSTDSAC (87 aa)) is disordered. The segment covering 19–36 (RGPTPRSRAPGAKLSAPE) has biased composition (low complexity). 2 TPR repeats span residues 144–177 (AMLLCNKSNAFYNLGKWNEAFLAAKECLQWDPTY) and 179–211 (KGYYRAGYSLLHLLQPYEAARMFFEGLRLLQRS). ANK repeat units lie at residues 297-327 (EKYVFIGFYEKLEQVPKLVQWLVSIGANIET), 328-361 (IGPNPLHALMRLCIQARESQLFRWVMDQKPEWKE), 369-405 (AGCTVLHVAAAHFPGYTSRRQTEDVQMLLSFGADPTL), 538-567 (SQDRPLLMCLRHEDFDLAFLLLTKGADPRS), 572-593 (EGDTPLHAALHIFLDINADIGF), and 621-654 (NGNTLMHLLFQKGMLKRTKKLIDLLVKFDINFNL). Disordered regions lie at residues 684 to 722 (RRKNRQDPAAHLGRLSRSSAPGHTSQLKSQTSFKSLPCG), 773 to 831 (MPLP…GASQ), 1151 to 1211 (LEVE…GCVP), and 1318 to 1344 (WEEDDEEVEADGNYNEEEKATETQTGD). Composition is skewed to polar residues over residues 699–717 (SRSSAPGHTSQLKSQTSFK) and 801–815 (TQRMGSSGCSGNNPV). The span at 1151–1164 (LEVEPGKEGPGREE) shows a compositional bias: basic and acidic residues. A compositionally biased stretch (acidic residues) spans 1318-1327 (WEEDDEEVEA). TPR repeat units follow at residues 1772–1805 (PYEWIIQGDYYAKHQCWKVAAKCYQKGDALEKEK) and 1866–1899 (LGKIRDAAYFYKRSQCFQDAFRCFEQIQEFDLAL).

Expressed only in the brain. Detected in the hippocampus, hypothalamus and cingulate gyrus.

The chain is TPR and ankyrin repeat-containing protein 1 (Trank1) from Mus musculus (Mouse).